We begin with the raw amino-acid sequence, 138 residues long: Ribosome-binding factor A (138 aa).

Belongs to the RbfA family. As to quaternary structure, monomer. Binds 30S ribosomal subunits, but not 50S ribosomal subunits or 70S ribosomes.

It localises to the cytoplasm. In terms of biological role, one of several proteins that assist in the late maturation steps of the functional core of the 30S ribosomal subunit. Associates with free 30S ribosomal subunits (but not with 30S subunits that are part of 70S ribosomes or polysomes). Required for efficient processing of 16S rRNA. May interact with the 5'-terminal helix region of 16S rRNA. This chain is Ribosome-binding factor A, found in Bradyrhizobium sp. (strain BTAi1 / ATCC BAA-1182).